The sequence spans 316 residues: Ribosomal RNA small subunit methyltransferase H (316 aa).

Residues 35-37 (AGH), Asp-55, Phe-84, Asp-105, and Gln-112 each bind S-adenosyl-L-methionine.

The protein belongs to the methyltransferase superfamily. RsmH family.

Its subcellular location is the cytoplasm. It carries out the reaction cytidine(1402) in 16S rRNA + S-adenosyl-L-methionine = N(4)-methylcytidine(1402) in 16S rRNA + S-adenosyl-L-homocysteine + H(+). Specifically methylates the N4 position of cytidine in position 1402 (C1402) of 16S rRNA. This chain is Ribosomal RNA small subunit methyltransferase H, found in Streptococcus pneumoniae (strain 70585).